Here is a 346-residue protein sequence, read N- to C-terminus: GTPase Obg (346 aa).

In terms of domain architecture, Obg spans 1–159 (MKFLDEAKVY…RWIWLRLKLI (159 aa)). The region spanning 160–327 (ADAGLVGLPN…ALRALVAVIG (168 aa)) is the OBG-type G domain. Residues 166–173 (GLPNAGKS), 191–195 (FTTLH), 212–215 (DIPG), 279–282 (NKID), and 308–310 (SAA) contribute to the GTP site. Mg(2+) contacts are provided by serine 173 and threonine 193.

This sequence belongs to the TRAFAC class OBG-HflX-like GTPase superfamily. OBG GTPase family. Monomer. Requires Mg(2+) as cofactor.

It is found in the cytoplasm. Functionally, an essential GTPase which binds GTP, GDP and possibly (p)ppGpp with moderate affinity, with high nucleotide exchange rates and a fairly low GTP hydrolysis rate. Plays a role in control of the cell cycle, stress response, ribosome biogenesis and in those bacteria that undergo differentiation, in morphogenesis control. This Bradyrhizobium diazoefficiens (strain JCM 10833 / BCRC 13528 / IAM 13628 / NBRC 14792 / USDA 110) protein is GTPase Obg.